Reading from the N-terminus, the 490-residue chain is GTPase Der (490 aa).

Residues methionine 1–leucine 165 form the EngA-type G 1 domain. GTP-binding positions include glycine 7–serine 14, aspartate 54–valine 58, and asparagine 117–aspartate 120. The disordered stretch occupies residues leucine 165–serine 184. The segment covering glutamate 169–glutamate 178 has biased composition (acidic residues). The EngA-type G 2 domain maps to leucine 227–threonine 400. GTP is bound by residues glycine 233–serine 240, aspartate 280–leucine 284, and asparagine 345–aspartate 348. A KH-like domain is found at threonine 401–proline 485.

It belongs to the TRAFAC class TrmE-Era-EngA-EngB-Septin-like GTPase superfamily. EngA (Der) GTPase family. In terms of assembly, associates with the 50S ribosomal subunit.

In terms of biological role, GTPase that plays an essential role in the late steps of ribosome biogenesis. This chain is GTPase Der, found in Chlamydia muridarum (strain MoPn / Nigg).